Here is a 61-residue protein sequence, read N- to C-terminus: Small ribosomal subunit protein uS14 (61 aa).

Zn(2+) is bound by residues C24, C27, C40, and C43.

Belongs to the universal ribosomal protein uS14 family. Zinc-binding uS14 subfamily. As to quaternary structure, part of the 30S ribosomal subunit. Contacts proteins S3 and S10. Zn(2+) serves as cofactor.

Its function is as follows. Binds 16S rRNA, required for the assembly of 30S particles and may also be responsible for determining the conformation of the 16S rRNA at the A site. In Clostridium beijerinckii (strain ATCC 51743 / NCIMB 8052) (Clostridium acetobutylicum), this protein is Small ribosomal subunit protein uS14.